Consider the following 243-residue polypeptide: Amphiregulin (243 aa).

An N-terminal signal peptide occupies residues 1-24 (MRTPSLSLALSVLSLLVLGSGHYA). Positions 25–96 (AGLELNGTSS…IVDDSVRVEQ (72 aa)) are excised as a propeptide. Residue N30 is glycosylated (N-linked (GlcNAc...) asparagine). The span at 55–67 (STISEMPSGSELS) shows a compositional bias: polar residues. Disordered regions lie at residues 55-75 (STISEMPSGSELSTGDYDYSE) and 98-135 (IKPKENKTEGEKSSEKPKRKKKGGKGGKGRRNRKKKKN). Positions 98–113 (IKPKENKTEGEKSSEK) are enriched in basic and acidic residues. A glycan (N-linked (GlcNAc...) asparagine) is linked at N103. The span at 114–135 (PKRKKKGGKGGKGRRNRKKKKN) shows a compositional bias: basic residues. In terms of domain architecture, EGF-like spans 133 to 173 (KKNPCAAKFQNFCIHGECRYIENLEVVTCHCHQDYFGERCG). Disulfide bonds link C137/C150, C145/C161, and C163/C172. The helical transmembrane segment at 190–213 (IALAAIIVFVSAVSVAAIGIITAV) threads the bilayer. N-linked (GlcNAc...) asparagine glycosylation occurs at N236.

It belongs to the amphiregulin family. The immature precursor interacts with CNIH.

The protein localises to the membrane. Its function is as follows. Ligand of the EGF receptor/EGFR. Autocrine growth factor as well as a mitogen for a broad range of target cells including astrocytes, Schwann cells and fibroblasts. The sequence is that of Amphiregulin (Areg) from Rattus norvegicus (Rat).